A 247-amino-acid polypeptide reads, in one-letter code: Probable transcriptional regulatory protein GTNG_2524 (247 aa).

The segment covering 1–14 (MAGHSKWKNIQRRK) has biased composition (basic residues). The disordered stretch occupies residues 1–21 (MAGHSKWKNIQRRKNAQDAKR).

The protein belongs to the TACO1 family.

It localises to the cytoplasm. The protein is Probable transcriptional regulatory protein GTNG_2524 of Geobacillus thermodenitrificans (strain NG80-2).